Consider the following 291-residue polypeptide: Nucleotide-binding protein lhv_0732 (291 aa).

ATP is bound at residue 13–20 (GMSGAGKT). 61 to 64 (DLRV) is a binding site for GTP.

It belongs to the RapZ-like family.

Displays ATPase and GTPase activities. This chain is Nucleotide-binding protein lhv_0732, found in Lactobacillus helveticus (strain DPC 4571).